The chain runs to 191 residues: MAAQIPIVAATSTPAVARNSKKRPASPSHNSSGGGYGASKKKKLSASGFAQGVSIEAMNESKMASSELSSGPVEKAAKPLPFKDPNFVHSGHGGAVAGKKNRTWKNLKQILAAERALPWQLNDPNYFSIDAPPSFKPAKKYSDISGLLANYTDPQSKLRFSTVEEFSYIRRLPSDVVTGYLALRKATSIVP.

Residues 1 to 41 (MAAQIPIVAATSTPAVARNSKKRPASPSHNSSGGGYGASKK) form a disordered region.

Component of the chromatin remodeling INO80 complex; specifically part of a complex module associated with the helicase ATP-binding and the helicase C-terminal domain of INO80. Component of some MLL1/MLL complex, at least composed of the core components KMT2A/MLL1, ASH2L, HCFC1/HCF1, WDR5 and RBBP5, as well as the facultative components BACC1, CHD8, E2F6, HSP70, INO80C, KANSL1, LAS1L, MAX, MCRS1, MGA, MYST1/MOF, PELP1, PHF20, PRP31, RING2, RUVB1/TIP49A, RUVB2/TIP49B, SENP3, TAF1, TAF4, TAF6, TAF7, TAF9 and TEX10.

It localises to the nucleus. Its function is as follows. Proposed core component of the chromatin remodeling INO80 complex which is involved in transcriptional regulation, DNA replication and probably DNA repair. The protein is INO80 complex subunit C (Ino80c) of Mus musculus (Mouse).